Reading from the N-terminus, the 323-residue chain is tRNA dimethylallyltransferase (323 aa).

12–19 (GPTAAGKT) is a binding site for ATP. 14 to 19 (TAAGKT) contributes to the substrate binding site. Interaction with substrate tRNA stretches follow at residues 37 to 40 (DSAL) and 161 to 165 (QRLMR).

This sequence belongs to the IPP transferase family. As to quaternary structure, monomer. Requires Mg(2+) as cofactor.

The enzyme catalyses adenosine(37) in tRNA + dimethylallyl diphosphate = N(6)-dimethylallyladenosine(37) in tRNA + diphosphate. Functionally, catalyzes the transfer of a dimethylallyl group onto the adenine at position 37 in tRNAs that read codons beginning with uridine, leading to the formation of N6-(dimethylallyl)adenosine (i(6)A). This chain is tRNA dimethylallyltransferase, found in Pseudomonas aeruginosa (strain LESB58).